A 125-amino-acid chain; its full sequence is MSKINEIIEAVKGLTVLELAELVKAFEEEFGVSAAAPVAMAAMPVAAAAAAPAEEQTEFDVILKAAGDKKVNVIKVVREITGLGLKEAKDLVDGAPKPVKEKVSKEEAESIKKKLEESGATVEVK.

The protein belongs to the bacterial ribosomal protein bL12 family. As to quaternary structure, homodimer. Part of the ribosomal stalk of the 50S ribosomal subunit. Forms a multimeric L10(L12)X complex, where L10 forms an elongated spine to which 2 to 4 L12 dimers bind in a sequential fashion. Binds GTP-bound translation factors.

Its function is as follows. Forms part of the ribosomal stalk which helps the ribosome interact with GTP-bound translation factors. Is thus essential for accurate translation. The chain is Large ribosomal subunit protein bL12 from Heliobacterium modesticaldum (strain ATCC 51547 / Ice1).